The following is an 88-amino-acid chain: Protein Aeq5-like1 (88 aa).

The first 20 residues, 1 to 20, serve as a signal peptide directing secretion; sequence MKSVIAVLVLSLVLVNFTQA. Cystine bridges form between cysteine 29/cysteine 68, cysteine 33/cysteine 64, cysteine 40/cysteine 56, and cysteine 47/cysteine 53.

Is expressed in the ectodermal cells of gastrulae and planulae. Is also noticeable in the endoderm in late planulae. In the primary polyps, is expressed in both ectoderm (sensory neurons) and endoderm (ganglions). Is not expressed in nematocytes.

Its function is as follows. Probable neuropeptide. This is Protein Aeq5-like1 from Nematostella vectensis (Starlet sea anemone).